The chain runs to 270 residues: Phosphonates import ATP-binding protein PhnC 2 (270 aa).

Residues 2–245 form the ABC transporter domain; that stretch reads LVVEGLTCRF…IARELYDLEA (244 aa). 34–41 contacts ATP; the sequence is GRSGAGKS.

It belongs to the ABC transporter superfamily. Phosphonates importer (TC 3.A.1.9.1) family. In terms of assembly, the complex is composed of two ATP-binding proteins (PhnC), two transmembrane proteins (PhnE) and a solute-binding protein (PhnD).

It is found in the cell inner membrane. It catalyses the reaction phosphonate(out) + ATP + H2O = phosphonate(in) + ADP + phosphate + H(+). Its function is as follows. Part of the ABC transporter complex PhnCDE involved in phosphonates import. Responsible for energy coupling to the transport system. The sequence is that of Phosphonates import ATP-binding protein PhnC 2 from Rhodopseudomonas palustris (strain BisA53).